The chain runs to 293 residues: ATP synthase subunit a (293 aa).

6 helical membrane passes run 40 to 60 (DSLF…WLAA), 97 to 117 (LFVA…NALD), 151 to 171 (DLNV…YYGI), 188 to 208 (FHAH…LNLI), 225 to 245 (MFAG…WTGF), and 264 to 284 (AIFH…LTLV).

The protein belongs to the ATPase A chain family. As to quaternary structure, F-type ATPases have 2 components, CF(1) - the catalytic core - and CF(0) - the membrane proton channel. CF(1) has five subunits: alpha(3), beta(3), gamma(1), delta(1), epsilon(1). CF(0) has three main subunits: a(1), b(2) and c(9-12). The alpha and beta chains form an alternating ring which encloses part of the gamma chain. CF(1) is attached to CF(0) by a central stalk formed by the gamma and epsilon chains, while a peripheral stalk is formed by the delta and b chains.

The protein resides in the cell inner membrane. Functionally, key component of the proton channel; it plays a direct role in the translocation of protons across the membrane. The chain is ATP synthase subunit a from Bordetella bronchiseptica (strain ATCC BAA-588 / NCTC 13252 / RB50) (Alcaligenes bronchisepticus).